We begin with the raw amino-acid sequence, 110 residues long: Quaternary ammonium compound-resistance protein QacE (110 aa).

Helical transmembrane passes span 1-21 (MKGW…TSAL), 30-50 (LAPS…LSLV), 58-78 (VAYA…AWLL), and 85-105 (AWGF…NLLS).

Belongs to the drug/metabolite transporter (DMT) superfamily. Small multidrug resistance (SMR) (TC 2.A.7.1) family.

Its subcellular location is the cell membrane. Its function is as follows. Multidrug exporter. Is implicated for the resistance to bacteriocidal quaternary ammonium compounds. This Escherichia coli protein is Quaternary ammonium compound-resistance protein QacE (qacE).